A 274-amino-acid polypeptide reads, in one-letter code: Large ribosomal subunit protein uL2cz/uL2cy (274 aa).

Disordered stretches follow at residues 1–33 and 223–265; these read MAIH…LIYG and MNPV…KYND.

This sequence belongs to the universal ribosomal protein uL2 family. In terms of assembly, part of the 50S ribosomal subunit.

The protein localises to the plastid. It is found in the chloroplast. This is Large ribosomal subunit protein uL2cz/uL2cy (rpl2-A) from Pelargonium hortorum (Common geranium).